Here is a 233-residue protein sequence, read N- to C-terminus: Small ribosomal subunit protein uS2 (233 aa).

This sequence belongs to the universal ribosomal protein uS2 family.

The sequence is that of Small ribosomal subunit protein uS2 from Bacillus mycoides (strain KBAB4) (Bacillus weihenstephanensis).